The primary structure comprises 351 residues: MEPAPGLVEQPKCLEAGSPEPEPAPWQALPVLSEKQSGDVELVLAYAAPVLDKRQTSRLLKEVSALHPLPAQPHLKRVRPSRDAGSPHALEMLLCLAGPASGPRSLAELLPRPAVDPRGLGQPFLVPVPARPPLTRGQFEEARAHWPTSFHEDKQVTSALAGRLFSTQERAAMQSHMERAVWAARRAAARGLRAVGAVVVDPASDRVLATGHDCSCADNPLLHAVMVCVDLVARGQGRGTYDFRPFPACSFAPAAAPQAVRAGAVRKLDADEDGLPYLCTGYDLYVTREPCAMCAMALVHARILRVFYGAPSPDGALGTRFRIHARPDLNHRFQVFRGVLEEQCRWLDPDT.

Met-1 is subject to N-acetylmethionine. The interval 1-26 (MEPAPGLVEQPKCLEAGSPEPEPAPW) is disordered. In terms of domain architecture, CMP/dCMP-type deaminase spans 171 to 336 (AAMQSHMERA…PDLNHRFQVF (166 aa)). Zn(2+) contacts are provided by His-223, Cys-291, and Cys-294.

This sequence belongs to the cytidine and deoxycytidylate deaminase family. ADAT3 subfamily. Zn(2+) serves as cofactor.

In Homo sapiens (Human), this protein is Probable inactive tRNA-specific adenosine deaminase-like protein 3 (ADAT3).